The primary structure comprises 351 residues: Phosphoribosylformylglycinamidine cyclo-ligase (351 aa).

Belongs to the AIR synthase family.

It is found in the cytoplasm. The catalysed reaction is 2-formamido-N(1)-(5-O-phospho-beta-D-ribosyl)acetamidine + ATP = 5-amino-1-(5-phospho-beta-D-ribosyl)imidazole + ADP + phosphate + H(+). It participates in purine metabolism; IMP biosynthesis via de novo pathway; 5-amino-1-(5-phospho-D-ribosyl)imidazole from N(2)-formyl-N(1)-(5-phospho-D-ribosyl)glycinamide: step 2/2. This Burkholderia vietnamiensis (strain G4 / LMG 22486) (Burkholderia cepacia (strain R1808)) protein is Phosphoribosylformylglycinamidine cyclo-ligase.